Here is a 392-residue protein sequence, read N- to C-terminus: Nuclear speckle splicing regulatory protein 1 homolog (392 aa).

3 disordered regions span residues Met1–Tyr73, Arg113–Asp169, and Leu187–Asp357. Basic and acidic residues-rich tracts occupy residues Lys54 to Ala65, Arg113 to Glu132, Lys149 to Gln160, Gln205 to Tyr238, and Lys313 to Asp357. Residues Asn76–Glu132 are a coiled coil.

This sequence belongs to the NSRP1 family. Expressed in the intestine, nervous system and head neurons in both larvae and adults. Expressed in the distal tip cell.

The protein resides in the cytoplasm. Its subcellular location is the nucleus. Required for the cessation of distal tip cell migration at the end of larval morphogenesis. The protein is Nuclear speckle splicing regulatory protein 1 homolog (ccdc-55) of Caenorhabditis elegans.